The sequence spans 267 residues: Malonyl-[acyl-carrier protein] O-methyltransferase (267 aa).

This sequence belongs to the methyltransferase superfamily.

The catalysed reaction is malonyl-[ACP] + S-adenosyl-L-methionine = malonyl-[ACP] methyl ester + S-adenosyl-L-homocysteine. It participates in cofactor biosynthesis; biotin biosynthesis. Functionally, converts the free carboxyl group of a malonyl-thioester to its methyl ester by transfer of a methyl group from S-adenosyl-L-methionine (SAM). It allows to synthesize pimeloyl-ACP via the fatty acid synthetic pathway. The sequence is that of Malonyl-[acyl-carrier protein] O-methyltransferase from Yersinia pestis.